The primary structure comprises 199 residues: MANRGPSYGLSREVQEKIEQKYDADLENKLVDWIILQCAEDIEHPPPGRAHFQKWLMDGTVLCKLINSLYPPGQEPIPKISESKMAFKQMEQISQFLKAAEIYGVRTTDIFQTVDLWEGKDMAAVQRTLMALGSVAVTKDDGCYRGEPSWFHRKAQQNRRGFSEEQLRQGQNVIGLQMGSNKGASQAGMTGYGMPRQIM.

The region spanning 24-136 (ADLENKLVDW…RTLMALGSVA (113 aa)) is the Calponin-homology (CH) domain. S163 is modified (phosphoserine). The Calponin-like repeat unit spans residues 174-199 (IGLQMGSNKGASQAGMTGYGMPRQIM). The span at 178–188 (MGSNKGASQAG) shows a compositional bias: polar residues. The segment at 178-199 (MGSNKGASQAGMTGYGMPRQIM) is disordered.

It belongs to the calponin family.

The polypeptide is Transgelin-3 (TAGLN3) (Bos taurus (Bovine)).